A 104-amino-acid chain; its full sequence is Co-chaperonin GroES 2 (104 aa).

The protein belongs to the GroES chaperonin family. Heptamer of 7 subunits arranged in a ring. Interacts with the chaperonin GroEL.

It is found in the cytoplasm. Functionally, together with the chaperonin GroEL, plays an essential role in assisting protein folding. The GroEL-GroES system forms a nano-cage that allows encapsulation of the non-native substrate proteins and provides a physical environment optimized to promote and accelerate protein folding. GroES binds to the apical surface of the GroEL ring, thereby capping the opening of the GroEL channel. This Mesorhizobium japonicum (strain LMG 29417 / CECT 9101 / MAFF 303099) (Mesorhizobium loti (strain MAFF 303099)) protein is Co-chaperonin GroES 2.